The primary structure comprises 364 residues: Coproporphyrin III ferrochelatase (364 aa).

Arginine 29 and tyrosine 118 together coordinate Fe-coproporphyrin III. 2 residues coordinate Fe(2+): histidine 169 and glutamate 250.

This sequence belongs to the ferrochelatase family.

The protein localises to the cytoplasm. The enzyme catalyses Fe-coproporphyrin III + 2 H(+) = coproporphyrin III + Fe(2+). Its pathway is porphyrin-containing compound metabolism; protoheme biosynthesis. Involved in coproporphyrin-dependent heme b biosynthesis. Catalyzes the insertion of ferrous iron into coproporphyrin III to form Fe-coproporphyrin III. In Streptococcus pneumoniae (strain 70585), this protein is Coproporphyrin III ferrochelatase.